We begin with the raw amino-acid sequence, 629 residues long: TRAF3-interacting protein 1 (629 aa).

The disordered stretch occupies residues Ala130–Lys511. Residues Ser145–Lys306 show a composition bias toward basic and acidic residues. Residues Arg220–Arg282 adopt a coiled-coil conformation. Acidic residues predominate over residues Glu352–Ala362. The span at Arg394–Pro403 shows a compositional bias: low complexity. The segment covering Gly471–Lys511 has biased composition (basic and acidic residues). Residues Lys511–Ile602 adopt a coiled-coil conformation.

Belongs to the TRAF3IP1 family. In terms of assembly, component of the IFT complex B, at least composed of ift20, ift22, ift25, ift27, ift46, ift52, traf3ip1/ift54, ift57, ift74, ift80, ift81, and ift88. Interacts with ift88. Interacts with il13ra1. Binds to microtubules, traf3 and disc1. Interacts with map4.

It localises to the cytoplasm. The protein resides in the cytoskeleton. Its subcellular location is the cell projection. The protein localises to the cilium. It is found in the cilium axoneme. It localises to the cilium basal body. Functionally, plays an inhibitory role on IL13 signaling by binding to IL13RA1 and recruits TRAF3 and DISC1 to the microtubules. Involved in the regulation of microtubule cytoskeleton organization. Is a negative regulator of microtubule stability, acting through the control of MAP4 levels. Involved in ciliogenesis. This is TRAF3-interacting protein 1 (traf3ip1) from Danio rerio (Zebrafish).